The chain runs to 199 residues: Dephospho-CoA kinase (199 aa).

Residues 2-199 enclose the DPCK domain; the sequence is KIAVTGGYSS…FVADRIEKKK (198 aa). An ATP-binding site is contributed by 10–15; it reads SSGKSS.

This sequence belongs to the CoaE family.

It is found in the cytoplasm. It carries out the reaction 3'-dephospho-CoA + ATP = ADP + CoA + H(+). Its pathway is cofactor biosynthesis; coenzyme A biosynthesis; CoA from (R)-pantothenate: step 5/5. Functionally, catalyzes the phosphorylation of the 3'-hydroxyl group of dephosphocoenzyme A to form coenzyme A. This chain is Dephospho-CoA kinase, found in Desulfotalea psychrophila (strain LSv54 / DSM 12343).